Consider the following 468-residue polypeptide: Glutamate--tRNA ligase 2 (468 aa).

Residues 9–19 (PSPTGFLHIGG) carry the 'HIGH' region motif. Residues 238 to 242 (KLSKR) carry the 'KMSKS' region motif. K241 contributes to the ATP binding site.

Belongs to the class-I aminoacyl-tRNA synthetase family. Glutamate--tRNA ligase type 1 subfamily. In terms of assembly, monomer.

Its subcellular location is the cytoplasm. The enzyme catalyses tRNA(Glu) + L-glutamate + ATP = L-glutamyl-tRNA(Glu) + AMP + diphosphate. In terms of biological role, catalyzes the attachment of glutamate to tRNA(Glu) in a two-step reaction: glutamate is first activated by ATP to form Glu-AMP and then transferred to the acceptor end of tRNA(Glu). The sequence is that of Glutamate--tRNA ligase 2 from Rhodospirillum centenum (strain ATCC 51521 / SW).